The chain runs to 335 residues: tRNA N6-adenosine threonylcarbamoyltransferase (335 aa).

Residues His-109, His-113, and Tyr-130 each contribute to the a divalent metal cation site. Substrate is bound by residues Tyr-130–Gly-134, Asp-162, Gly-177, Glu-181, and Asn-266. Asp-294 is a binding site for a divalent metal cation.

The protein belongs to the KAE1 / TsaD family. Component of the EKC/KEOPS complex composed of at least GON7, TP53RK, TPRKB, OSGEP and LAGE3; the whole complex dimerizes. Interacts with PRAME. It depends on a divalent metal cation as a cofactor. As to expression, widely expressed at low level. Expressed in heart, placenta, liver, kidney, lung, brain, skeletal muscle and pancreas.

The protein resides in the cytoplasm. It localises to the nucleus. The catalysed reaction is L-threonylcarbamoyladenylate + adenosine(37) in tRNA = N(6)-L-threonylcarbamoyladenosine(37) in tRNA + AMP + H(+). Its function is as follows. Component of the EKC/KEOPS complex that is required for the formation of a threonylcarbamoyl group on adenosine at position 37 (t(6)A37) in tRNAs that read codons beginning with adenine. The complex is probably involved in the transfer of the threonylcarbamoyl moiety of threonylcarbamoyl-AMP (TC-AMP) to the N6 group of A37. OSGEP likely plays a direct catalytic role in this reaction, but requires other protein(s) of the complex to fulfill this activity. The sequence is that of tRNA N6-adenosine threonylcarbamoyltransferase from Homo sapiens (Human).